A 294-amino-acid polypeptide reads, in one-letter code: Glycine--tRNA ligase alpha subunit (294 aa).

It belongs to the class-II aminoacyl-tRNA synthetase family. In terms of assembly, tetramer of two alpha and two beta subunits.

It is found in the cytoplasm. The enzyme catalyses tRNA(Gly) + glycine + ATP = glycyl-tRNA(Gly) + AMP + diphosphate. In Nostoc sp. (strain PCC 7120 / SAG 25.82 / UTEX 2576), this protein is Glycine--tRNA ligase alpha subunit.